The following is a 316-amino-acid chain: uncharacterized protein (316 aa).

One can recognise an S4 RNA-binding domain in the interval 26-98 (ERIDRFLAGA…IPLDVVYEDA (73 aa)). Asp148 is a catalytic residue.

It belongs to the pseudouridine synthase RluA family.

It catalyses the reaction a uridine in RNA = a pseudouridine in RNA. This is an uncharacterized protein from Chloroflexus aurantiacus (strain ATCC 29366 / DSM 635 / J-10-fl).